The following is a 1006-amino-acid chain: Probable protein phosphatase DDB_G0279461 (1006 aa).

Polar residues predominate over residues 1-12 (MMVPSLSTSISS). Disordered stretches follow at residues 1–119 (MMVP…NNKE), 146–188 (SHAS…RSNS), 214–269 (SSED…NGIR), 312–387 (DAES…PPNQ), 459–513 (NINN…NNIQ), 525–563 (DYNI…NSKF), and 604–642 (GSIP…TSAS). Residues 59 to 69 (NEEEGTADNEL) are compositionally biased toward acidic residues. Residues 65–122 (ADNELESLMSLVNDNNNNNNNTSGIDDDNNNDIDDNNNNNNNNNNNNNNNNNNKEGLN) are a coiled coil. Low complexity predominate over residues 77–88 (NDNNNNNNNTSG). Over residues 89-99 (IDDDNNNDIDD) the composition is skewed to acidic residues. The span at 100–117 (NNNNNNNNNNNNNNNNNN) shows a compositional bias: low complexity. Residues 146–158 (SHASVSNQSSNGS) show a composition bias toward polar residues. Low complexity-rich tracts occupy residues 220 to 234 (SCHN…NKNN), 244 to 254 (NINNNNNNNCN), and 316 to 387 (NYNN…PPNQ). The stretch at 450–516 (KIDNLNKNIN…NNNNNIQDIQ (67 aa)) forms a coiled coil. Residues 466–481 (TDSQQPLPSIDVNFSH) are compositionally biased toward polar residues. Residues 482–511 (NNNNNNNDNDNNNNNNNNNNNNNNNNNNNN) are compositionally biased toward low complexity. Polar residues predominate over residues 525 to 538 (DYNIQEGNDINNDN). Composition is skewed to low complexity over residues 552–561 (SSNNNNNNNS) and 613–639 (NNNN…TTTT). The PPM-type phosphatase domain maps to 744-1005 (DINKRGLKRA…DNISIIVVTL (262 aa)). Mn(2+) is bound by residues Asp784, Gly785, Asp956, and Asp996.

The protein in the C-terminal section; belongs to the PP2C family. It depends on Mg(2+) as a cofactor. Requires Mn(2+) as cofactor.

The catalysed reaction is O-phospho-L-seryl-[protein] + H2O = L-seryl-[protein] + phosphate. It carries out the reaction O-phospho-L-threonyl-[protein] + H2O = L-threonyl-[protein] + phosphate. The chain is Probable protein phosphatase DDB_G0279461 from Dictyostelium discoideum (Social amoeba).